Reading from the N-terminus, the 99-residue chain is L-rhamnose mutarotase (99 aa).

Tyrosine 18 lines the substrate pocket. The active-site Proton donor is the histidine 22. Substrate is bound by residues tyrosine 41 and 76-77 (WW).

This sequence belongs to the rhamnose mutarotase family. In terms of assembly, homodimer.

The protein localises to the cytoplasm. It carries out the reaction alpha-L-rhamnose = beta-L-rhamnose. It functions in the pathway carbohydrate metabolism; L-rhamnose metabolism. Involved in the anomeric conversion of L-rhamnose. The polypeptide is L-rhamnose mutarotase (Shigella boydii serotype 18 (strain CDC 3083-94 / BS512)).